The following is a 289-amino-acid chain: uncharacterized protein (289 aa).

This is an uncharacterized protein from Schizosaccharomyces pombe (strain 972 / ATCC 24843) (Fission yeast).